The primary structure comprises 280 residues: Probable endonuclease 4 (280 aa).

Zn(2+)-binding residues include His-69, His-109, Glu-145, Asp-179, His-182, His-216, Asp-229, His-231, and Glu-261.

The protein belongs to the AP endonuclease 2 family. The cofactor is Zn(2+).

It carries out the reaction Endonucleolytic cleavage to 5'-phosphooligonucleotide end-products.. Its function is as follows. Endonuclease IV plays a role in DNA repair. It cleaves phosphodiester bonds at apurinic or apyrimidinic (AP) sites, generating a 3'-hydroxyl group and a 5'-terminal sugar phosphate. The protein is Probable endonuclease 4 of Erwinia tasmaniensis (strain DSM 17950 / CFBP 7177 / CIP 109463 / NCPPB 4357 / Et1/99).